The primary structure comprises 833 residues: MTFYNHKEIEPKWQAFWADNHTFKTGTDASKPKFYALDMFPYPSGAGLHVGHPEGYTATDILSRFKRAQGHNVLHPMGWDAFGLPAEQYAMDTGNDPAEFTAENIANFKRQINALGFSYDWDREVNTTDPNYYKWTQWIFTKLYEKGLAYEAEVPVNWVEELGTAIANEEVLPDGTSERGGYPVVRKPMRQWMLKITAYAERLLEDLEEVDWPESIKDMQRNWIGKSTGANVTFKVKDTDKDFTVFTTRPDTLFGATYAVLAPEHALVDAITTADQAEAVAEYKRQASLKSDLARTDLAKEKTGVWTGAYAINPVNGKEIPVWIADYVLASYGTGAIMAVPAHDERDWEFAKQFKLDIIPVLEGGNVEEAAFTEDGLHINSDFLDGLDKASAIAKMVEWLEAEGVGNEKVTYRLRDWLFSRQRYWGEPIPIIHWEDGTSTAVPESELPLVLPVTKDIRPSGTGESPLANLTDWLEVTREDGVKGRRETNTMPQWAGSSWYYLRYIDPHNTEKLADEELLKQWLPVDIYVGGAEHAVLHLLYARFWHKVLYDLGVVPTKEPFQKLFNQGMILGTSYRDSRGALVATDKVEKRDGSFFHVETGEELEQAPAKMSKSLKNVVNPDDVVEQYGADTLRVYEMFMGPLDASIAWSEEGLEGSRKFLDRVYRLITTKEITKENSGALDKVYNETVKAVTEQVDQMKFNTAIAQLMVFVNAANKEDKLFSDYAKGFVQLIAPFAPHLGEELWQVLTASGESISYVPWPSYDESKLVENEIEIVVQIKGKVKAKLVVAKDLSREELQDLALANEKVQSEIAGKDIIKVIAVPNKLVNIVVK.

A 'HIGH' region motif is present at residues 41-52; that stretch reads PYPSGAGLHVGH. The short motif at 610–614 is the 'KMSKS' region element; the sequence is KMSKS. An ATP-binding site is contributed by Lys-613.

It belongs to the class-I aminoacyl-tRNA synthetase family.

It localises to the cytoplasm. It carries out the reaction tRNA(Leu) + L-leucine + ATP = L-leucyl-tRNA(Leu) + AMP + diphosphate. The polypeptide is Leucine--tRNA ligase (Streptococcus agalactiae serotype Ia (strain ATCC 27591 / A909 / CDC SS700)).